Here is a 150-residue protein sequence, read N- to C-terminus: 3-dehydroquinate dehydratase (150 aa).

Tyr26 (proton acceptor) is an active-site residue. Positions 77, 83, and 90 each coordinate substrate. His103 acts as the Proton donor in catalysis. Residues 104 to 105 (LS) and Arg114 each bind substrate.

Belongs to the type-II 3-dehydroquinase family. In terms of assembly, homododecamer.

It carries out the reaction 3-dehydroquinate = 3-dehydroshikimate + H2O. The protein operates within metabolic intermediate biosynthesis; chorismate biosynthesis; chorismate from D-erythrose 4-phosphate and phosphoenolpyruvate: step 3/7. In terms of biological role, catalyzes a trans-dehydration via an enolate intermediate. This chain is 3-dehydroquinate dehydratase, found in Photobacterium profundum (strain SS9).